We begin with the raw amino-acid sequence, 234 residues long: MASIPGLLFSLTKPMDPTIPEAQFNDWYTNKHLVDTVNSGLASLAVRFKNVNPSHQWPYLALYRLQDLAKLYNMEFMSSLPTDSPAGWGVPNSKADIRIEPRGYQLLTTLERENAKTGVPKFVLTVEFRESFMNAEAFVASCQGLQLDDVGKQPGYRRSMLYQAGRSLVTQEGKAGTEFRSAEQQQPSYLVVHEFDQMPTNTFQEQGASGLWEYMAEYGTGLYRTEPVPVKVYN.

The protein operates within mycotoxin biosynthesis. In terms of biological role, part of the core atranone cluster (CAC) which products are predicted to catalyze most or all steps of mycotoxin atranone synthesis, starting from geranylgeranyl pyrophosphate (GGPP). The initial cyclization of GGPP to dolabellane is probably performed by the terpene cyclase ATR13. The Baeyer-Villiger oxidation near the end of the atranone synthesis, which converts atranones D and E to atranones F and G is predicted to be catalyzed by the monooxygenase ATR8. Of the CAC's other predicted gene products, the reducing PKS ATR6 might synthesize a polyketide chain. This polyketide is probably transferred onto the atranone backbone by the polyketide transferase ATR5. Other predicted CAC products include 4 oxygenases (ATR2, ATR3, ATR4, and ATR14), 3 short-chain reductases (ATR7, ATR9, and ATR10), and a methyltransferase (ATR12). These may all be involved in the various steps of atranone biosynthesis, although their specific roles must await experimental determination. In Stachybotrys chlorohalonatus (strain IBT 40285), this protein is Core atranone cluster (CAC) protein 1.